The chain runs to 238 residues: Probable transcriptional regulatory protein VV2_1184 (238 aa).

It belongs to the TACO1 family.

It localises to the cytoplasm. This is Probable transcriptional regulatory protein VV2_1184 from Vibrio vulnificus (strain CMCP6).